The sequence spans 275 residues: Notch homolog 2 N-terminal-like protein B (275 aa).

The N-terminal stretch at 1–25 (MPALRPALLWALLALWLCCATPAHA) is a signal peptide. EGF-like domains lie at 26-63 (LQCR…EYCQ), 64-102 (HRDP…EDCQ), 105-143 (TSHP…KECQ), and 144-180 (WTDA…QKCE). 17 disulfides stabilise this stretch: cysteine 28/cysteine 41, cysteine 35/cysteine 51, cysteine 53/cysteine 62, cysteine 68/cysteine 79, cysteine 73/cysteine 90, cysteine 92/cysteine 101, cysteine 109/cysteine 121, cysteine 115/cysteine 131, cysteine 133/cysteine 142, cysteine 148/cysteine 159, cysteine 153/cysteine 168, cysteine 170/cysteine 179, cysteine 186/cysteine 198, cysteine 192/cysteine 207, cysteine 209/cysteine 218, cysteine 225/cysteine 236, and cysteine 230/cysteine 246. N-linked (GlcNAc...) asparagine glycosylation occurs at asparagine 46. A glycan (N-linked (GlcNAc...) asparagine) is linked at asparagine 155. One can recognise an EGF-like 5; calcium-binding domain in the interval 182–219 (DVNECDIPGHCQHGGICLNLPGSYQCQCLQGFTGQYCD). Residues 221 to 258 (LYVPCAPSPCVNGGTCRQTGDFTFECNCLPETVRRGTE) form the EGF-like 6 domain.

It belongs to the NOTCH family. Interacts with NOTCH2. Interacts with DLL1; the interaction is direct. As to expression, expressed in radial glia neural stem cells during cortical development.

Its subcellular location is the secreted. In terms of biological role, human-specific protein that promotes neural progenitor proliferation and evolutionary expansion of the brain neocortex by regulating the Notch signaling pathway. Able to promote neural progenitor self-renewal, possibly by down-regulating neuronal differentiation genes, thereby delaying the differentiation of neuronal progenitors and leading to an overall final increase in neuronal production. Acts by enhancing the Notch signaling pathway via two different mechanisms that probably work in parallel to reach the same effect. Enhances Notch signaling pathway in a non-cell-autonomous manner via direct interaction with NOTCH2. Also promotes Notch signaling pathway in a cell-autonomous manner through inhibition of cis DLL1-NOTCH2 interactions, which promotes neuronal differentiation. In Homo sapiens (Human), this protein is Notch homolog 2 N-terminal-like protein B.